A 187-amino-acid chain; its full sequence is Putative lipoprotein LppJ (187 aa).

The first 28 residues, M1–G28, serve as a signal peptide directing secretion. A lipid anchor (N-palmitoyl cysteine) is attached at C29. Residue C29 is the site of S-diacylglycerol cysteine attachment.

It is found in the cell membrane. The chain is Putative lipoprotein LppJ (lppJ) from Mycobacterium tuberculosis (strain CDC 1551 / Oshkosh).